Here is a 175-residue protein sequence, read N- to C-terminus: Ribosome maturation factor RimM (175 aa).

Residues 99 to 172 (EGEFHLLDLV…WLRLTPPPGL (74 aa)) enclose the PRC barrel domain.

This sequence belongs to the RimM family. As to quaternary structure, binds ribosomal protein uS19.

Its subcellular location is the cytoplasm. Its function is as follows. An accessory protein needed during the final step in the assembly of 30S ribosomal subunit, possibly for assembly of the head region. Essential for efficient processing of 16S rRNA. May be needed both before and after RbfA during the maturation of 16S rRNA. It has affinity for free ribosomal 30S subunits but not for 70S ribosomes. The sequence is that of Ribosome maturation factor RimM from Synechococcus sp. (strain WH7803).